The primary structure comprises 216 residues: Protein Syd (216 aa).

It belongs to the Syd family.

Its subcellular location is the cell inner membrane. In terms of biological role, interacts with the SecY protein in vivo. May bind preferentially to an uncomplexed state of SecY, thus functioning either as a chelating agent for excess SecY in the cell or as a regulatory factor that negatively controls the translocase function. The chain is Protein Syd from Shewanella baltica (strain OS155 / ATCC BAA-1091).